Here is a 370-residue protein sequence, read N- to C-terminus: F-box protein At3g20690 (370 aa).

Positions 1 to 45 constitute an F-box domain; the sequence is MMMSDLPHDLVEEILSRLPLISLKAMRSTCKTWNVLSKHRSFANK.

This is F-box protein At3g20690 from Arabidopsis thaliana (Mouse-ear cress).